A 278-amino-acid polypeptide reads, in one-letter code: Lipoyl-[GcvH]:protein N-lipoyltransferase (278 aa).

The 207-residue stretch at 44–250 (RMAPSTVRGW…SLRHYAGDLV (207 aa)) folds into the BPL/LPL catalytic domain. The Acyl-thioester intermediate role is filled by cysteine 149.

Belongs to the octanoyltransferase LipL family.

The enzyme catalyses N(6)-[(R)-lipoyl]-L-lysyl-[glycine-cleavage complex H protein] + L-lysyl-[lipoyl-carrier protein] = L-lysyl-[glycine-cleavage complex H protein] + N(6)-[(R)-lipoyl]-L-lysyl-[lipoyl-carrier protein]. It functions in the pathway protein modification; protein lipoylation via exogenous pathway. Catalyzes the amidotransfer (transamidation) of the lipoyl moiety from lipoyl-GcvH to the lipoyl domain of the E2 subunit of lipoate-dependent enzymes. Takes part in a pathway for scavenging of lipoic acid derived from eukaryotic host cells. Cannot use lipoyl-tripeptide (DK(L)A), lipoamide (LD), or free lipoate as substrate. In Listeria monocytogenes serovar 1/2a (strain ATCC BAA-679 / EGD-e), this protein is Lipoyl-[GcvH]:protein N-lipoyltransferase.